A 294-amino-acid chain; its full sequence is MVKIEKKLHKPLWLKIKLPSSDYKIKVIKKTMNKSSLYTICEEACCPNLAECFNNGTATFMILGNICTRRCPFCNVAHGRPLIPDIHEPEKLAETITNMGLRYVVITSVNRDDLYDGGAQHFVDCIRAIRAKNSATRIEVLVPDFRGHMKTALEILNTSPPDVFNHNIENVPRLYRHIRPGADYHRSLKLLKKFKEYNPSLPTKSGLMMGLGETREEIIEVMRDLRQHNVTMLTLGQYLQPSSNHLPVQRYITPQEFNEMKLESLAMGFTYAACGPFVRSSYHADLQNKGIEVK.

Positions 41, 46, 52, 67, 71, 74, and 281 each coordinate [4Fe-4S] cluster. Residues 53 to 270 form the Radical SAM core domain; the sequence is FNNGTATFMI…KLESLAMGFT (218 aa).

The protein belongs to the radical SAM superfamily. Lipoyl synthase family. It depends on [4Fe-4S] cluster as a cofactor.

It localises to the cytoplasm. The enzyme catalyses [[Fe-S] cluster scaffold protein carrying a second [4Fe-4S](2+) cluster] + N(6)-octanoyl-L-lysyl-[protein] + 2 oxidized [2Fe-2S]-[ferredoxin] + 2 S-adenosyl-L-methionine + 4 H(+) = [[Fe-S] cluster scaffold protein] + N(6)-[(R)-dihydrolipoyl]-L-lysyl-[protein] + 4 Fe(3+) + 2 hydrogen sulfide + 2 5'-deoxyadenosine + 2 L-methionine + 2 reduced [2Fe-2S]-[ferredoxin]. Its pathway is protein modification; protein lipoylation via endogenous pathway; protein N(6)-(lipoyl)lysine from octanoyl-[acyl-carrier-protein]: step 2/2. Catalyzes the radical-mediated insertion of two sulfur atoms into the C-6 and C-8 positions of the octanoyl moiety bound to the lipoyl domains of lipoate-dependent enzymes, thereby converting the octanoylated domains into lipoylated derivatives. The chain is Lipoyl synthase from Baumannia cicadellinicola subsp. Homalodisca coagulata.